Consider the following 436-residue polypeptide: Trigger factor (436 aa).

The region spanning 163 to 248 (GDRVVLDFAG…VKEVAEGVLP (86 aa)) is the PPIase FKBP-type domain.

It belongs to the FKBP-type PPIase family. Tig subfamily.

It localises to the cytoplasm. The enzyme catalyses [protein]-peptidylproline (omega=180) = [protein]-peptidylproline (omega=0). Involved in protein export. Acts as a chaperone by maintaining the newly synthesized protein in an open conformation. Functions as a peptidyl-prolyl cis-trans isomerase. This Bordetella parapertussis (strain 12822 / ATCC BAA-587 / NCTC 13253) protein is Trigger factor.